Reading from the N-terminus, the 541-residue chain is Tetratricopeptide repeat protein 8 (541 aa).

The stretch at 14-47 is one TPR 1 repeat; the sequence is YFRRRKFQLCADLCTQMLEKSPYDQEPDPELPVH. A disordered region spans residues 118–137; that stretch reads PITGFLRPSTQSGRPGTMEQ. TPR repeat units follow at residues 251–284, 285–317, 318–351, 352–385, 386–419, 423–456, and 457–490; these read WWWKVQIGKCYYRLGMYREAEKQFKSALKQQEMV, DTFLYLAKVYVSLDQPVTALNLFKQGLDKFPGE, VTLLCGIARIYEEMNNMSSAAEYYKEVLKQDNTH, VEAIACIGSNHFYSDQPEIALRFYRRLLQMGIYN, GQLFNNLGLCCFYAQQYDMTLTSFERALSLAENE, ADVWYNLGHVAVGIGDTNLAHQCFRLALVNNNNH, and AEAYNNLAVLEMRKGHVEQARALLQTASSLAPHM.

In terms of assembly, part of BBSome complex, that contains BBS1, BBS2, BBS4, BBS5, BBS7, BBS8/TTC8, BBS9 and BBIP10. Interacts with PCM1. Interacts with CCDC28B. Interacts with PKD1. As to expression, widely expressed.

It localises to the cytoplasm. The protein localises to the cytoskeleton. The protein resides in the microtubule organizing center. It is found in the centrosome. Its subcellular location is the cell projection. It localises to the cilium membrane. The protein localises to the centriolar satellite. The protein resides in the cilium. The BBSome complex is thought to function as a coat complex required for sorting of specific membrane proteins to the primary cilia. The BBSome complex is required for ciliogenesis but is dispensable for centriolar satellite function. This ciliogenic function is mediated in part by the Rab8 GDP/GTP exchange factor, which localizes to the basal body and contacts the BBSome. Rab8(GTP) enters the primary cilium and promotes extension of the ciliary membrane. Firstly the BBSome associates with the ciliary membrane and binds to RAB3IP/Rabin8, the guanosyl exchange factor (GEF) for Rab8 and then the Rab8-GTP localizes to the cilium and promotes docking and fusion of carrier vesicles to the base of the ciliary membrane. The BBSome complex, together with the LTZL1, controls SMO ciliary trafficking and contributes to the sonic hedgehog (SHH) pathway regulation. Required for proper BBSome complex assembly and its ciliary localization. The sequence is that of Tetratricopeptide repeat protein 8 (TTC8) from Homo sapiens (Human).